The chain runs to 249 residues: Ribosomal RNA small subunit methyltransferase J (249 aa).

Residues 101-102, 117-118, and aspartate 171 contribute to the S-adenosyl-L-methionine site; these read RD and ER.

Belongs to the methyltransferase superfamily. RsmJ family.

It localises to the cytoplasm. The enzyme catalyses guanosine(1516) in 16S rRNA + S-adenosyl-L-methionine = N(2)-methylguanosine(1516) in 16S rRNA + S-adenosyl-L-homocysteine + H(+). In terms of biological role, specifically methylates the guanosine in position 1516 of 16S rRNA. This chain is Ribosomal RNA small subunit methyltransferase J, found in Tolumonas auensis (strain DSM 9187 / NBRC 110442 / TA 4).